The primary structure comprises 512 residues: Maturase K (512 aa).

This sequence belongs to the intron maturase 2 family. MatK subfamily.

Its subcellular location is the plastid. It localises to the chloroplast. Usually encoded in the trnK tRNA gene intron. Probably assists in splicing its own and other chloroplast group II introns. The sequence is that of Maturase K from Amorphophallus abyssinicus (Black arum).